The sequence spans 85 residues: MDPKKIARINELAKKKKTVGLTGPEKVEQAKLREEYIEGYRRSVRHHIEGIKIVDEDGNDVTPEKLRQVQREKGLHGRSLDDPES.

Residues 62–85 (TPEKLRQVQREKGLHGRSLDDPES) form a disordered region.

It belongs to the UPF0291 family.

The protein resides in the cytoplasm. The polypeptide is UPF0291 protein SEQ_0545 (Streptococcus equi subsp. equi (strain 4047)).